Here is a 296-residue protein sequence, read N- to C-terminus: Polyadenylate-binding protein 2-A (296 aa).

The segment at 1–106 (MAAVSSVASL…GELTGDQTIE (106 aa)) is disordered. Gly residues predominate over residues 71–82 (GRGGSGGGGAGG). Residues 84-97 (EELEDEELEEEEPG) show a composition bias toward acidic residues. A coiled-coil region spans residues 107 to 141 (DPELEAIKARVREMEEEAEKLKELQNEVEKQMNMS). Positions 146 to 296 (NAGPVIMSVE…ARATSWYTPY (151 aa)) are necessary for homooligomerization. In terms of domain architecture, RRM spans 163-240 (RSIYVGNVDY…RQIKVVPKRT (78 aa)).

As to quaternary structure, monomer and homooligomer. Binds RNA as a monomer and oligomerizes when bound to poly(A). Shows dynamic spatial expression throughout development. First expressed in the animal pole region of the egg and this pattern persists through to the blastula stage. In gastrula and neurula embryos, expressed mainly in ectodermal, neural and epidermal regions. Neural tissue-specific expression pattern persists into tailbud stage when expression is localized to the brain and spinal cord. At early tadpole stage, expression becomes gradually confined to the specific vesicle regions of the developing brain. At stage 39, expressed in the telencephalon and mesencephalon regions of the brain. Also detected in the eye and olfactory pit at the tadpole stage. Expressed during gut endoderm development. At stage 35, expressed exclusively in the anterior portion of the gut endoderm, which includes the prospective liver, stomach and pancreas. As development proceeds, expression becomes restricted to the pancreas, and by stage 46/47 (the seventh day of development) expression is localized exclusively to the pancreas. Expressed in most adult tissues.

Its subcellular location is the nucleus. It is found in the cytoplasm. In terms of biological role, involved in the 3'-end formation of mRNA precursors (pre-mRNA) by the addition of a poly(A) tail of 200-250 nt to the upstream cleavage product. Stimulates poly(A) polymerase (PAPOLA) conferring processivity on the poly(A) tail elongation reaction and also controls the poly(A) tail length. Increases the affinity of poly(A) polymerase for RNA. Binds to poly(A) and to poly(G) with high affinity. May protect the poly(A) tail from degradation. The polypeptide is Polyadenylate-binding protein 2-A (pabpn1-a) (Xenopus laevis (African clawed frog)).